A 206-amino-acid chain; its full sequence is Small ribosomal subunit protein uS4 (206 aa).

Residues 96-156 (RRLDNVVYRM…DKSKNQSRIK (61 aa)) form the S4 RNA-binding domain.

This sequence belongs to the universal ribosomal protein uS4 family. As to quaternary structure, part of the 30S ribosomal subunit. Contacts protein S5. The interaction surface between S4 and S5 is involved in control of translational fidelity.

In terms of biological role, one of the primary rRNA binding proteins, it binds directly to 16S rRNA where it nucleates assembly of the body of the 30S subunit. With S5 and S12 plays an important role in translational accuracy. This Buchnera aphidicola subsp. Schizaphis graminum (strain Sg) protein is Small ribosomal subunit protein uS4.